The following is a 1169-amino-acid chain: Transcription-repair-coupling factor (1169 aa).

A Helicase ATP-binding domain is found at 634 to 795; sequence DMERARPMDR…MLGVRDLSVI (162 aa). 647-654 lines the ATP pocket; it reads GDVGYGKT. The short motif at 748-751 is the DEEQ box element; the sequence is DEEQ. The region spanning 809–970 is the Helicase C-terminal domain; it reads VLEQNTNFIK…GFKIAMRDLN (162 aa).

The protein in the N-terminal section; belongs to the UvrB family. This sequence in the C-terminal section; belongs to the helicase family. RecG subfamily.

Its subcellular location is the cytoplasm. In terms of biological role, couples transcription and DNA repair by recognizing RNA polymerase (RNAP) stalled at DNA lesions. Mediates ATP-dependent release of RNAP and its truncated transcript from the DNA, and recruitment of nucleotide excision repair machinery to the damaged site. The protein is Transcription-repair-coupling factor of Staphylococcus epidermidis (strain ATCC 35984 / DSM 28319 / BCRC 17069 / CCUG 31568 / BM 3577 / RP62A).